Consider the following 224-residue polypeptide: Urease accessory protein UreF (224 aa).

It belongs to the UreF family. In terms of assembly, ureD, UreF and UreG form a complex that acts as a GTP-hydrolysis-dependent molecular chaperone, activating the urease apoprotein by helping to assemble the nickel containing metallocenter of UreC. The UreE protein probably delivers the nickel.

It localises to the cytoplasm. Required for maturation of urease via the functional incorporation of the urease nickel metallocenter. This chain is Urease accessory protein UreF, found in Klebsiella pneumoniae (strain 342).